Here is a 629-residue protein sequence, read N- to C-terminus: RNA polymerase sigma factor RpoD (629 aa).

Positions 183-228 are disordered; it reads HNGLDEDFSDEDDEEESSNADVEDNEDEEDNESESTSDSSDSDNSI. A compositionally biased stretch (acidic residues) spans 187-228; the sequence is DEDFSDEDDEEESSNADVEDNEDEEDNESESTSDSSDSDNSI. Residues 395–465 are sigma-70 factor domain-2; the sequence is MVEANLRLVI…TRSIADQART (71 aa). The short motif at 419–422 is the Interaction with polymerase core subunit RpoC element; it reads DLIQ. The sigma-70 factor domain-3 stretch occupies residues 474-550; sequence ETINKLNRIS…DSTLELPLDS (77 aa). Positions 563-616 are sigma-70 factor domain-4; sequence VLEGLTPREAKVLRMRFGIDMNTDHTLEEVGKQFDVTRERIRQIEAKALRKLRH. A DNA-binding region (H-T-H motif) is located at residues 589-608; it reads LEEVGKQFDVTRERIRQIEA.

It belongs to the sigma-70 factor family. RpoD/SigA subfamily. In terms of assembly, interacts transiently with the RNA polymerase catalytic core.

It localises to the cytoplasm. In terms of biological role, sigma factors are initiation factors that promote the attachment of RNA polymerase to specific initiation sites and are then released. This sigma factor is the primary sigma factor during exponential growth. The chain is RNA polymerase sigma factor RpoD from Haemophilus influenzae (strain ATCC 51907 / DSM 11121 / KW20 / Rd).